We begin with the raw amino-acid sequence, 518 residues long: Sensory neuron membrane protein 1 (518 aa).

At 1-8 the chain is on the cytoplasmic side; that stretch reads MKTAEKLG. The helical transmembrane segment at 9 to 29 threads the bilayer; that stretch reads IIGTTISIFGIGFGWGVFPWL. The Extracellular portion of the chain corresponds to 30 to 456; sequence IRMQIGRVSL…ELFRILQFLD (427 aa). Residues Asn64, Asn186, Asn225, Asn316, Asn334, and Asn381 are each glycosylated (N-linked (GlcNAc...) asparagine). 3 disulfide bridges follow: Cys265-Cys330, Cys294-Cys349, and Cys332-Cys338. A helical membrane pass occupies residues 457–477; it reads VIKWVITLFGAGVVSGGVGLY. Over 478 to 518 the chain is Cytoplasmic; that stretch reads YKEKNSLPITPTSSATSKKIDNPTDKTTTHELGHTNFGYIN.

This sequence belongs to the CD36 family.

It localises to the cell membrane. Its function is as follows. Plays an olfactory role that is not restricted to pheromone sensitivity. In Pediculus humanus subsp. corporis (Body louse), this protein is Sensory neuron membrane protein 1.